The sequence spans 277 residues: Hydroxyethylthiazole kinase (277 aa).

Met56 contributes to the substrate binding site. Residues Arg131 and Thr177 each coordinate ATP. Ala204 provides a ligand contact to substrate.

Belongs to the Thz kinase family. Mg(2+) serves as cofactor.

It catalyses the reaction 5-(2-hydroxyethyl)-4-methylthiazole + ATP = 4-methyl-5-(2-phosphooxyethyl)-thiazole + ADP + H(+). It participates in cofactor biosynthesis; thiamine diphosphate biosynthesis; 4-methyl-5-(2-phosphoethyl)-thiazole from 5-(2-hydroxyethyl)-4-methylthiazole: step 1/1. In terms of biological role, catalyzes the phosphorylation of the hydroxyl group of 4-methyl-5-beta-hydroxyethylthiazole (THZ). The sequence is that of Hydroxyethylthiazole kinase from Gemmatimonas aurantiaca (strain DSM 14586 / JCM 11422 / NBRC 100505 / T-27).